Reading from the N-terminus, the 117-residue chain is Large ribosomal subunit protein uL18 (117 aa).

Belongs to the universal ribosomal protein uL18 family. As to quaternary structure, part of the 50S ribosomal subunit; part of the 5S rRNA/L5/L18/L25 subcomplex. Contacts the 5S and 23S rRNAs.

Its function is as follows. This is one of the proteins that bind and probably mediate the attachment of the 5S RNA into the large ribosomal subunit, where it forms part of the central protuberance. The chain is Large ribosomal subunit protein uL18 from Hydrogenovibrio crunogenus (strain DSM 25203 / XCL-2) (Thiomicrospira crunogena).